Here is a 1852-residue protein sequence, read N- to C-terminus: Voltage-dependent L-type calcium channel subunit alpha-1S (1852 aa).

The segment at 1-23 is disordered; that stretch reads MEPPSPQDEGLRKKQPKKPVPEI. At 1–51 the chain is on the cytoplasmic side; sequence MEPPSPQDEGLRKKQPKKPVPEILPRPPRALFCLTLQNPLRKACISIVEWK. An I repeat occupies 38-337; the sequence is NPLRKACISI…LVLGVLSGEF (300 aa). The chain crosses the membrane as a helical span at residues 52-70; that stretch reads PFETIILLTIFANCVALAV. Topologically, residues 71–85 are extracellular; sequence YLPMPEDDNNTLNLG. Residue Asn79 is glycosylated (N-linked (GlcNAc...) asparagine). The chain crosses the membrane as a helical span at residues 86 to 106; sequence LEKLEYFFLIVFSIEAAMKII. Over 107-115 the chain is Cytoplasmic; it reads AYGFLFHQD. The chain crosses the membrane as a helical span at residues 116–136; that stretch reads AYLRSGWNVLDFIIVFLGVFT. At 137–160 the chain is on the extracellular side; sequence VILEQVNIIQTNTAPMSSKGAGLD. A helical transmembrane segment spans residues 161–179; it reads VKALRAFRVLRPLRLVSGV. Residues 180–196 are Cytoplasmic-facing; the sequence is PSLQVVLNSIFKAMLPL. A helical transmembrane segment spans residues 197–218; it reads FHIALLVLFMVIIYAIIGLELF. Residues 219 to 279 are Extracellular-facing; the sequence is KGKMHKTCYF…HGITHFDNFG (61 aa). Intrachain disulfides connect Cys226-Cys254 and Cys245-Cys261. N-linked (GlcNAc...) asparagine glycosylation occurs at Asn257. The segment at residues 280-301 is an intramembrane region (pore-forming); it reads FSMLTVYQCISMEGWTDVLYWV. Residues 290-293 carry the Selectivity filter of repeat I motif; the sequence is SMEG. Glu292 contributes to the Ca(2+) binding site. The Extracellular portion of the chain corresponds to 302–309; sequence NDAIGNEW. Residues 310 to 330 traverse the membrane as a helical segment; it reads PWIYFVTLILLGSFFILNLVL. Residues 331–432 lie on the Cytoplasmic side of the membrane; it reads GVLSGEFTKE…WKCHDLVKSK (102 aa). The tract at residues 357–374 is binding to the beta subunit; sequence QQLEEDLRGYMSWITQGE. Residues Ser393 and Ser397 each carry the phosphoserine modification. The II repeat unit spans residues 418–664; it reads NRVFRWKCHD…VFLAIAVDNL (247 aa). Residues 433–451 form a helical membrane-spanning segment; sequence VFYWLVILIVALNTLSIAS. Over 452–462 the chain is Extracellular; that stretch reads EHHNQPLWLTH. The chain crosses the membrane as a helical span at residues 463 to 483; that stretch reads LQDVANRVLLTLFTIEMLMKM. Over 484–494 the chain is Cytoplasmic; sequence YGLGLRQYFMS. Residues 495-514 form a helical membrane-spanning segment; the sequence is IFNRFDCFVVCSGILEILLV. Residues 515-523 are Extracellular-facing; the sequence is ESGAMSPLG. Residues 524-542 traverse the membrane as a helical segment; the sequence is ISVLRCIRLLRLFKITKYW. At 543–561 the chain is on the cytoplasmic side; sequence TSLSNLVASLLNSIRSIAS. Residues 562-581 traverse the membrane as a helical segment; the sequence is LLLLLFLFIIIFALLGMQLF. Topologically, residues 582-601 are extracellular; that stretch reads GGRYDFEDTEVRRSNFDNFP. Residues 602–623 constitute an intramembrane region (pore-forming); sequence QALISVFQVLTGEDWNSVMYNG. Positions 612 to 615 match the Selectivity filter of repeat II motif; that stretch reads TGED. Glu614 is a binding site for Ca(2+). The Extracellular portion of the chain corresponds to 624-633; that stretch reads IMAYGGPTYP. A helical transmembrane segment spans residues 634–653; sequence GVLVCIYFIILFVCGNYILL. The Cytoplasmic segment spans residues 654 to 799; sequence NVFLAIAVDN…VLCHRIVNAT (146 aa). 2 disordered regions span residues 675 to 712 and 731 to 757; these read KAKA…SKGE and EVKD…VSPR. Position 687 is a phosphoserine; by PKA (Ser687). Positions 690–711 are enriched in basic and acidic residues; that stretch reads LPDKSEEERATVTKKLEQKSKG. Over residues 742–751 the composition is skewed to acidic residues; it reads PGDDEEDEPE. The III repeat unit spans residues 768–1068; that stretch reads EKAVPIPEAS…IFVGFVIVTF (301 aa). Residues 800–818 form a helical membrane-spanning segment; it reads WFTNFILLFILLSSAALAA. At 819-830 the chain is on the extracellular side; that stretch reads EDPIRADSMRNQ. The chain crosses the membrane as a helical span at residues 831–850; sequence ILEYFDYVFTAVFTVEIVLK. Topologically, residues 851–866 are cytoplasmic; the sequence is MTTYGAFLHKGSFCRN. A helical transmembrane segment spans residues 867–885; it reads YFNILDLLVVAVSLISMGL. Residues 886-892 are Extracellular-facing; it reads ESSAISV. A helical membrane pass occupies residues 893 to 911; that stretch reads VKILRVLRVLRPLRAINRA. The Cytoplasmic segment spans residues 912–930; that stretch reads KGLKHVVQCVFVAIRTIGN. The chain crosses the membrane as a helical span at residues 931–950; that stretch reads IVLVTTLLQFMFACIGVQLF. Residues 951–1000 lie on the Extracellular side of the membrane; it reads KGKFYSCNDLSKMTEEECRGYYYIYKDGDPTQIELRPRQWIHNDFHFDNV. A disulfide bridge connects residues Cys957 and Cys968. Residues 988–1077 are dihydropyridine binding; sequence RQWIHNDFHF…FQEQGETEYK (90 aa). Positions 1001 to 1021 form an intramembrane region, pore-forming; that stretch reads LSAMMSLFTVSTFEGWPQLLY. The short motif at 1012–1015 is the Selectivity filter of repeat III element; the sequence is TFEG. Glu1014 contributes to the Ca(2+) binding site. Topologically, residues 1022 to 1038 are extracellular; the sequence is KAIDSNEEDTGPVYNNR. Residues 1039–1060 traverse the membrane as a helical segment; it reads VEMAIFFIIYIILIAFFMMNIF. At 1061–1118 the chain is on the cytoplasmic side; it reads VGFVIVTFQEQGETEYKNCELDKNQRQCVQYALKARPLRCYIPKNPYQYQVWYVVTSS. An IV repeat occupies 1105 to 1384; the sequence is NPYQYQVWYV…LFVAVIMDNF (280 aa). A helical membrane pass occupies residues 1119 to 1140; the sequence is YFEYLMFALIMLNTICLGMQHY. N-linked (GlcNAc...) asparagine glycosylation occurs at Asn1141. Topologically, residues 1141–1148 are extracellular; sequence NQSEQMNH. The helical transmembrane segment at 1149–1170 threads the bilayer; that stretch reads ISDILNVAFTIIFTLEMVLKLI. Over 1171 to 1180 the chain is Cytoplasmic; sequence AFKPRGYFGD. Residues 1181–1200 form a helical membrane-spanning segment; sequence PWNVFDFLIVIGSIIDVILS. At 1201–1231 the chain is on the extracellular side; the sequence is EIDTFLASSGGLYCLGGGCGNVDPDESARIS. A helical transmembrane segment spans residues 1232–1250; that stretch reads SAFFRLFRVMRLVKLLNRA. The Cytoplasmic portion of the chain corresponds to 1251–1268; that stretch reads EGVRTLLWTFIKSFQALP. A helical transmembrane segment spans residues 1269 to 1289; that stretch reads YVALLIVMLFFIYAVIGMQMF. Residues 1290–1311 lie on the Extracellular side of the membrane; that stretch reads GKIAMVDGTQINRNNNFQTFPQ. An intramembrane region (pore-forming) is located at residues 1312–1330; the sequence is AVLLLFRCATGEAWQEILL. The Selectivity filter of repeat IV motif lies at 1321-1324; it reads TGEA. The Extracellular portion of the chain corresponds to 1331-1356; it reads ACSYGKLCDPESDYAPGEEHTCGTNF. The interval 1337 to 1403 is dihydropyridine binding; it reads LCDPESDYAP…LGPHHLDEFK (67 aa). Cys1338 and Cys1352 are oxidised to a cystine. 2 phenylalkylamine binding regions span residues 1349 to 1391 and 1349 to 1392; these read EHTC…TRDW and EHTC…RDWS. A helical transmembrane segment spans residues 1357 to 1381; it reads AYYYFISFYMLCAFLIINLFVAVIM. Residues 1382–1852 lie on the Cytoplasmic side of the membrane; sequence DNFDYLTRDW…PEGGAVPWEP (471 aa). An interaction with calmodulin region spans residues 1522 to 1542; the sequence is KFYATFLIQEHFRKFMKRQEE. Phosphoserine; by PKA and CAMK2 is present on Ser1575. At Thr1579 the chain carries Phosphothreonine. Position 1617 is a phosphoserine; by PKA (Ser1617). Disordered stretches follow at residues 1702–1721 and 1727–1762; these read GPLS…HVDK and TQRG…PTSR. A compositionally biased stretch (basic and acidic residues) spans 1747–1757; sequence KAEHPVQKEGK.

Belongs to the calcium channel alpha-1 subunit (TC 1.A.1.11) family. CACNA1S subfamily. As to quaternary structure, component of a calcium channel complex consisting of a pore-forming alpha subunit (CACNA1S) and the ancillary subunits CACNB1 or CACNB2, CACNG1 and CACNA2D1. The channel complex contains alpha, beta, gamma and delta subunits in a 1:1:1:1 ratio, i.e. it contains either CACNB1 or CACNB2. CACNA1S channel activity is modulated by the auxiliary subunits (CACNB1 or CACNB2, CACNG1 and CACNA2D1). Interacts with DYSF and JSRP1. Interacts with RYR1. Interacts with STAC, STAC2 and STAC3 (via their SH3 domains). Interacts with CALM. The alpha-1S subunit is found in two isoforms in the skeletal muscle: a minor form of 212 kDa containing the complete amino acid sequence, and a major form of 190 kDa derived from the full-length form by post-translational proteolysis close to Phe-1690. Post-translationally, phosphorylated. Phosphorylation by PKA activates the calcium channel. Both the minor and major forms are phosphorylated in vitro by PKA. Phosphorylation at Ser-1575 is involved in beta-adrenergic-mediated regulation of the channel.

Its subcellular location is the cell membrane. It localises to the sarcolemma. It is found in the T-tubule. It catalyses the reaction Ca(2+)(in) = Ca(2+)(out). Channel activity is blocked by dihydropyridines (DHP), phenylalkylamines, and by benzothiazepines. Its function is as follows. Pore-forming, alpha-1S subunit of the voltage-gated calcium channel that gives rise to L-type calcium currents in skeletal muscle. Calcium channels containing the alpha-1S subunit play an important role in excitation-contraction coupling in skeletal muscle via their interaction with RYR1, which triggers Ca(2+) release from the sarcplasmic reticulum and ultimately results in muscle contraction. Long-lasting (L-type) calcium channels belong to the 'high-voltage activated' (HVA) group. The chain is Voltage-dependent L-type calcium channel subunit alpha-1S (Cacna1s) from Mus musculus (Mouse).